We begin with the raw amino-acid sequence, 338 residues long: Solute carrier family 35 member G3 (338 aa).

The interval 1-24 (MAGSHPYFNQPDSTHPSPPSAPPS) is disordered. 9 helical membrane passes run 37 to 57 (TSGL…VGPL), 67 to 87 (LPSL…ALLL), 105 to 125 (FFCA…VQVV), 160 to 180 (CGLL…LWTL), 190 to 210 (ALGY…LLVY), 221 to 241 (TVAF…LFVL), 250 to 270 (LLSW…FTCV), 281 to 301 (LVCA…YYML), and 305 to 325 (VAPS…IITA). One can recognise an EamA 1 domain in the interval 49–174 (LPAGFVGPLS…CILGLIIIVG (126 aa)). Residues 272 to 325 (YAVTKAHPALVCAVLHSEVVVALILQYYMLHETVAPSDIMGAGVALGSIAIITA) form the EamA 2 domain.

The protein belongs to the SLC35G solute transporter family.

The protein resides in the membrane. The protein is Solute carrier family 35 member G3 (SLC35G3) of Pan paniscus (Pygmy chimpanzee).